The sequence spans 331 residues: Holliday junction branch migration complex subunit RuvB (331 aa).

The interval 1 to 182 (MSNDTLHKYE…FGIPLHLEFY (182 aa)) is large ATPase domain (RuvB-L). ATP-binding positions include Leu21, Arg22, Gly63, Lys66, Thr67, Thr68, 129–131 (EDY), Arg172, Tyr182, and Arg219. Residue Thr67 coordinates Mg(2+). The small ATPAse domain (RuvB-S) stretch occupies residues 183–254 (SVDELVLVIK…FANSALFRLG (72 aa)). The segment at 257 to 331 (GAGFDKMDLK…FEYLLSSKYI (75 aa)) is head domain (RuvB-H). Residues Arg310 and Arg315 each coordinate DNA.

Belongs to the RuvB family. In terms of assembly, homohexamer. Forms an RuvA(8)-RuvB(12)-Holliday junction (HJ) complex. HJ DNA is sandwiched between 2 RuvA tetramers; dsDNA enters through RuvA and exits via RuvB. An RuvB hexamer assembles on each DNA strand where it exits the tetramer. Each RuvB hexamer is contacted by two RuvA subunits (via domain III) on 2 adjacent RuvB subunits; this complex drives branch migration. In the full resolvosome a probable DNA-RuvA(4)-RuvB(12)-RuvC(2) complex forms which resolves the HJ.

It localises to the cytoplasm. The enzyme catalyses ATP + H2O = ADP + phosphate + H(+). Functionally, the RuvA-RuvB-RuvC complex processes Holliday junction (HJ) DNA during genetic recombination and DNA repair, while the RuvA-RuvB complex plays an important role in the rescue of blocked DNA replication forks via replication fork reversal (RFR). RuvA specifically binds to HJ cruciform DNA, conferring on it an open structure. The RuvB hexamer acts as an ATP-dependent pump, pulling dsDNA into and through the RuvAB complex. RuvB forms 2 homohexamers on either side of HJ DNA bound by 1 or 2 RuvA tetramers; 4 subunits per hexamer contact DNA at a time. Coordinated motions by a converter formed by DNA-disengaged RuvB subunits stimulates ATP hydrolysis and nucleotide exchange. Immobilization of the converter enables RuvB to convert the ATP-contained energy into a lever motion, pulling 2 nucleotides of DNA out of the RuvA tetramer per ATP hydrolyzed, thus driving DNA branch migration. The RuvB motors rotate together with the DNA substrate, which together with the progressing nucleotide cycle form the mechanistic basis for DNA recombination by continuous HJ branch migration. Branch migration allows RuvC to scan DNA until it finds its consensus sequence, where it cleaves and resolves cruciform DNA. This is Holliday junction branch migration complex subunit RuvB from Anaplasma marginale (strain Florida).